The sequence spans 683 residues: Zinc finger protein 418 (683 aa).

The 76-residue stretch at 48–123 folds into the KRAB domain; the sequence is VTIEDVTVYF…TPKQGQLRQK (76 aa). Residues 102–120 are compositionally biased toward polar residues; the sequence is QSLSQTEAPQVRTPKQGQL. Disordered stretches follow at residues 102–124 and 209–247; these read QSLS…RQKP and DIPN…QHRL. The span at 225–239 shows a compositional bias: basic and acidic residues; that stretch reads FHRDKNNSESDEYKK. 14 C2H2-type zinc fingers span residues 287–309, 315–337, 343–365, 371–393, 399–421, 427–449, 455–477, 483–505, 511–533, 539–561, 567–589, 595–617, 623–645, and 651–673; these read YECH…QRRH, YKCG…CRVH, FECL…QRTH, YECS…QRTH, YECG…QRVH, YHCE…SKIH, YECG…QRTH, YECR…RRIH, YECE…QRVH, YKCE…QRTH, YECA…QKIH, YHCD…QRVH, YTCG…RRIH, and YECD…QLLH.

Belongs to the krueppel C2H2-type zinc-finger protein family.

Its subcellular location is the nucleus. Transcriptional repressor. May play a role as regulator of the ubiquitin-proteasome system and autophagy-lysosomal pathway. The chain is Zinc finger protein 418 from Rattus norvegicus (Rat).